A 67-amino-acid chain; its full sequence is Large ribosomal subunit protein uL30 (67 aa).

Belongs to the universal ribosomal protein uL30 family. As to quaternary structure, part of the 50S ribosomal subunit.

In Thermotoga petrophila (strain ATCC BAA-488 / DSM 13995 / JCM 10881 / RKU-1), this protein is Large ribosomal subunit protein uL30.